The chain runs to 476 residues: Exoglucanase-6A (476 aa).

The first 16 residues, 1-16, serve as a signal peptide directing secretion; it reads MAKFFLTAAFAAAALA. Intrachain disulfides connect Cys33–Cys50 and Cys44–Cys60. Residues 33 to 60 enclose the CBM1 domain; that stretch reads CGGIGFNGPTCCQSGSTCVKQNDWYSQC. The disordered stretch occupies residues 67 to 94; it reads TTTSTTSTSSSSTTSRATSTTRTGGVTS. An O-linked (Man...) threonine glycan is attached at Thr144. O-linked (Man...) serine glycosylation is present at Ser153. Substrate contacts are provided by Trp163 and Asp165. Asn167 is a glycosylation site (N-linked (GlcNAc...) asparagine). The tract at residues 200 to 222 is substrate binding loop 1; it reads YDLPDRDCAAAASNGEWAIANNG. Asp252 acts as the Proton donor in catalysis. Substrate is bound by residues His297, Trp300, Asn336, Trp397, Lys425, and Glu429. The interval 423–461 is substrate binding loop 2; the sequence is WVKPGGECDGTSDTTAARYDYHCGLEDALKPAPEAGQWF. Asp431 acts as the Proton acceptor in catalysis.

This sequence belongs to the glycosyl hydrolase 6 (cellulase A) family. Monomer.

The catalysed reaction is Hydrolysis of (1-&gt;4)-beta-D-glucosidic linkages in cellulose and cellotetraose, releasing cellobiose from the non-reducing ends of the chains.. Functionally, plays a central role in the recycling of plant biomass. The biological conversion of cellulose to glucose generally requires three types of hydrolytic enzymes: (1) Endoglucanases which cut internal beta-1,4-glucosidic bonds; (2) Exocellobiohydrolases that cut the disaccharide cellobiose from the non-reducing end of the cellulose polymer chain; (3) Beta-1,4-glucosidases which hydrolyze the cellobiose and other short cello-oligosaccharides to glucose. The polypeptide is Exoglucanase-6A (Humicola insolens (Soft-rot fungus)).